Here is a 323-residue protein sequence, read N- to C-terminus: Serpentine receptor class gamma-5 (323 aa).

A run of 7 helical transmembrane segments spans residues 31–51, 63–83, 98–117, 151–171, 193–213, 245–265, and 272–292; these read QLFY…IMLF, FIIF…DLFI, YPLF…IYNY, IPVT…NVII, WASL…ITVF, AAFF…ITAA, and FLQG…MVLI.

The protein belongs to the nematode receptor-like protein srg family.

It localises to the membrane. This chain is Serpentine receptor class gamma-5 (srg-5), found in Caenorhabditis elegans.